The following is a 580-amino-acid chain: Mitogen-activated protein kinase 12 (580 aa).

The segment at 18-38 is disordered; the sequence is RTASGSNQSSNAGEEAASSDL. Polar residues predominate over residues 20–29; sequence ASGSNQSSNA. The region spanning 87–378 is the Protein kinase domain; the sequence is YQIQEVIGKG…AEEALADPYF (292 aa). ATP contacts are provided by residues 93-101 and K116; that span reads IGKGSYGVV. The active-site Proton acceptor is D213. Position 249 is a phosphothreonine (T249). Positions 249 to 251 match the TXY motif; sequence TDY. Residue Y251 is modified to Phosphotyrosine. The required for kinase activity and nuclear localization stretch occupies residues 325-506; sequence ARRYLSTMRK…SADSVARTTV (182 aa). Residues 458–580 are disordered; it reads YSKGERGSPL…LSEQVSRMHS (123 aa). Positions 502-543 are enriched in polar residues; sequence ARTTVSPPMSQDAQQHGSAGQNGVTSTDLSSRSYLKSASISA. Positions 554–566 are enriched in acidic residues; that stretch reads EPEDDYISEEMEG.

Belongs to the protein kinase superfamily. CMGC Ser/Thr protein kinase family. MAP kinase subfamily. In terms of assembly, interacts with EREBP1. Dually phosphorylated on Thr-249 and Tyr-251, which activates the enzyme. Phosphorylated on tyrosine residue.

It is found in the cytoplasm. The protein localises to the nucleus. It catalyses the reaction L-seryl-[protein] + ATP = O-phospho-L-seryl-[protein] + ADP + H(+). The catalysed reaction is L-threonyl-[protein] + ATP = O-phospho-L-threonyl-[protein] + ADP + H(+). Its activity is regulated as follows. Activated by threonine and tyrosine phosphorylation. Activated in response to hydrogen peroxide, salicylic acid, jasmonic acid, ethylene, fungal elicitor and infection with rice blast fungus (M.grisea). Functionally, may be involved in defense signaling pathway. Phosphorylates EREBP1 transcriptional activator in vitro. Enhances DNA-binding activity of EREBP1 to the GCC box element of pathogenesis-related (PR) gene promoters. This chain is Mitogen-activated protein kinase 12 (MPK12), found in Oryza sativa subsp. japonica (Rice).